We begin with the raw amino-acid sequence, 185 residues long: Large ribosomal subunit protein uL22 (185 aa).

The segment at 160–185 is disordered; that stretch reads VSHDDSQKKKVSKKKLARQKEKMMRE.

Belongs to the universal ribosomal protein uL22 family.

This is Large ribosomal subunit protein uL22 (RpL17) from Maconellicoccus hirsutus (Pink hibiscus mealybug).